A 1792-amino-acid polypeptide reads, in one-letter code: uncharacterized protein (1792 aa).

Positions 1 to 28 (MNNNNNNNNNSNNNNNSNNNNNGNSNNN) are enriched in low complexity. Disordered regions lie at residues 1–34 (MNNNNNNNNNSNNNNNSNNNNNGNSNNNFFSGKG), 162–187 (TNISNNNKQPISSNQHPYQQKQSHHH), 440–461 (KKRKKKERKKNENIYNNRNKSS), 544–568 (VIDDNKKRNKKEKKKTIPNNDSIIN), 736–777 (NKNK…INSN), 837–979 (TKGK…NDLK), 1044–1071 (VSKSNIPSSFSSPPKETNNKNDIDKEQS), 1084–1106 (NMNNEKSKDLYFNKNDIDNNDNK), 1160–1215 (TSSG…VLER), 1257–1290 (NITANNNNDNNKNNDNDNNNNNNDNIINNNNNNG), 1651–1686 (LRSKSDTKSKEHKKKDKKYKMLFKKKEGKGKPGRKK), 1704–1731 (PRKKYERVKPRKSKNAMMNEEKSGNSEK), and 1742–1761 (IENKHKSKKGRKPKESNLNN). The segment covering 169–182 (KQPISSNQHPYQQK) has biased composition (polar residues). Residues 550–559 (KRNKKEKKKT) show a composition bias toward basic residues. Residues 741 to 776 (PNNINSNDNNNKNDDNNNNNNKNVDGNNNNNNNINS) are compositionally biased toward low complexity. A compositionally biased stretch (basic residues) spans 838 to 847 (KGKKKGRKKK). The segment covering 856 to 873 (NIKEDIKSSKKDKKKDNI) has biased composition (basic and acidic residues). Low complexity predominate over residues 874-924 (NDNNNDNNNDNNNDNNNDNNNDNNNDNNNDNNNNNNNNNNNNNNNNNNNHN). Basic residues predominate over residues 943 to 954 (KKKTRQYRKKSK). The segment covering 955–966 (ITNDDNNEKIKQ) has biased composition (basic and acidic residues). The segment covering 1045-1057 (SKSNIPSSFSSPP) has biased composition (low complexity). 3 stretches are compositionally biased toward basic and acidic residues: residues 1060-1071 (TNNKNDIDKEQS), 1088-1106 (EKSKDLYFNKNDIDNNDNK), and 1166-1192 (NKEENNKKEDDEKHFDDNTNEQKKNVD). Positions 1205 to 1215 (RKKRKKDVLER) are enriched in basic residues. A compositionally biased stretch (low complexity) spans 1261-1289 (NNNNDNNKNNDNDNNNNNNDNIINNNNNN). Basic residues-rich tracts occupy residues 1660–1686 (KEHKKKDKKYKMLFKKKEGKGKPGRKK) and 1704–1717 (PRKKYERVKPRKSK).

This is an uncharacterized protein from Plasmodium falciparum (isolate 3D7).